Consider the following 319-residue polypeptide: Ferrochelatase (319 aa).

Fe cation-binding residues include His194 and Glu275.

The protein belongs to the ferrochelatase family.

It localises to the cytoplasm. The catalysed reaction is heme b + 2 H(+) = protoporphyrin IX + Fe(2+). The protein operates within porphyrin-containing compound metabolism; protoheme biosynthesis; protoheme from protoporphyrin-IX: step 1/1. Its function is as follows. Catalyzes the ferrous insertion into protoporphyrin IX. The protein is Ferrochelatase of Hamiltonella defensa subsp. Acyrthosiphon pisum (strain 5AT).